The chain runs to 288 residues: Energy-coupling factor transporter ATP-binding protein EcfA2 (288 aa).

An ABC transporter domain is found at 3-245 (IIVKNLTHIY…NASKLKDIGL (243 aa)). Residue 40-47 (GHTGSGKS) participates in ATP binding.

This sequence belongs to the ABC transporter superfamily. Energy-coupling factor EcfA family. As to quaternary structure, forms a stable energy-coupling factor (ECF) transporter complex composed of 2 membrane-embedded substrate-binding proteins (S component), 2 ATP-binding proteins (A component) and 2 transmembrane proteins (T component).

The protein resides in the cell membrane. ATP-binding (A) component of a common energy-coupling factor (ECF) ABC-transporter complex. Unlike classic ABC transporters this ECF transporter provides the energy necessary to transport a number of different substrates. The protein is Energy-coupling factor transporter ATP-binding protein EcfA2 of Clostridioides difficile (strain 630) (Peptoclostridium difficile).